We begin with the raw amino-acid sequence, 20 residues long: Cytochrome P450 3A5 (20 aa).

This sequence belongs to the cytochrome P450 family. Requires heme as cofactor.

It localises to the endoplasmic reticulum membrane. The protein resides in the microsome membrane. It catalyses the reaction an organic molecule + reduced [NADPH--hemoprotein reductase] + O2 = an alcohol + oxidized [NADPH--hemoprotein reductase] + H2O + H(+). Functionally, 6-beta-testosterone hydroxylase. The chain is Cytochrome P450 3A5 from Papio sp. (Baboon).